The chain runs to 106 residues: Thioredoxin-2 (106 aa).

The region spanning 1-106 (MVYQVKDKAD…RLEDVIKANI (106 aa)) is the Thioredoxin domain. Catalysis depends on nucleophile residues C32 and C35. C32 and C35 are oxidised to a cystine.

This sequence belongs to the thioredoxin family. As to quaternary structure, monomer.

Its function is as follows. Participates in various redox reactions through the reversible oxidation of its active center dithiol to a disulfide and catalyzes dithiol-disulfide exchange reactions. As a reducing substrate of peroxiredoxin 1, thioredoxin 2 is preferred over thioredoxin 1. The protein is Thioredoxin-2 of Drosophila melanogaster (Fruit fly).